A 129-amino-acid chain; its full sequence is MKLFPGLLFCSLVLGVSGQWYSFVSEAAQGAWDMWRAYSDMREANYKNSDKYFHARGNYDAAQRGPGGAWAAKVISDARENSQRITDLLRFGDSGHGAEDSKADQAANEWGRSGKDPNHFRPAGLPDKY.

The first 18 residues, 1 to 18 (MKLFPGLLFCSLVLGVSG), serve as a signal peptide directing secretion. At Q19 the chain carries Pyrrolidone carboxylic acid. Residues 92–129 (GDSGHGAEDSKADQAANEWGRSGKDPNHFRPAGLPDKY) form a disordered region. Positions 112–129 (RSGKDPNHFRPAGLPDKY) are cleaved as a propeptide — often cleaved during amyloidogenesis.

This sequence belongs to the SAA family. This protein is the precursor of amyloid protein A, which is formed by the removal of residues from the C-terminal end. In terms of tissue distribution, expressed by the liver; secreted in plasma.

The protein resides in the secreted. In terms of biological role, major acute phase reactant. Apolipoprotein of the HDL complex. The protein is Serum amyloid A protein (SAA1) of Canis lupus familiaris (Dog).